The following is a 66-amino-acid chain: Large ribosomal subunit protein uL30 (66 aa).

The protein belongs to the universal ribosomal protein uL30 family. In terms of assembly, part of the 50S ribosomal subunit.

This is Large ribosomal subunit protein uL30 from Chloroherpeton thalassium (strain ATCC 35110 / GB-78).